Here is a 179-residue protein sequence, read N- to C-terminus: SCAN domain-containing protein 1 (179 aa).

Residues methionine 1–proline 104 form a disordered region. A compositionally biased stretch (low complexity) spans serine 52–proline 80. The SCAN box domain occupies arginine 108–alanine 166.

Interacts with ZNF202.

It is found in the nucleus. May regulate transcriptional activity. The protein is SCAN domain-containing protein 1 (SCAND1) of Homo sapiens (Human).